We begin with the raw amino-acid sequence, 467 residues long: Bifunctional enzyme LpxC/FabZ (467 aa).

The UDP-3-O-acyl-N-acetylglucosamine deacetylase stretch occupies residues 1–306; it reads MLIHQRTLQN…FVKQLKKYAD (306 aa). Zn(2+)-binding residues include His79, His264, and Asp268. His291 (proton donor) is an active-site residue. Residues 307–467 are 3-hydroxyacyl-[acyl-carrier-protein] dehydratase; the sequence is RNKLARQYQH…LMATVMEKKN (161 aa). Residue His370 is part of the active site.

The protein in the N-terminal section; belongs to the LpxC family. In the C-terminal section; belongs to the thioester dehydratase family. Zn(2+) is required as a cofactor.

It is found in the cytoplasm. The enzyme catalyses a UDP-3-O-[(3R)-3-hydroxyacyl]-N-acetyl-alpha-D-glucosamine + H2O = a UDP-3-O-[(3R)-3-hydroxyacyl]-alpha-D-glucosamine + acetate. It carries out the reaction a (3R)-hydroxyacyl-[ACP] = a (2E)-enoyl-[ACP] + H2O. The protein operates within glycolipid biosynthesis; lipid IV(A) biosynthesis; lipid IV(A) from (3R)-3-hydroxytetradecanoyl-[acyl-carrier-protein] and UDP-N-acetyl-alpha-D-glucosamine: step 2/6. In terms of biological role, catalyzes the hydrolysis of UDP-3-O-myristoyl-N-acetylglucosamine to form UDP-3-O-myristoylglucosamine and acetate, the committed step in lipid A biosynthesis. Its function is as follows. Involved in unsaturated fatty acids biosynthesis. Catalyzes the dehydration of short chain beta-hydroxyacyl-ACPs and long chain saturated and unsaturated beta-hydroxyacyl-ACPs. This is Bifunctional enzyme LpxC/FabZ (lpxC/fabZ) from Chlorobaculum tepidum (strain ATCC 49652 / DSM 12025 / NBRC 103806 / TLS) (Chlorobium tepidum).